Consider the following 67-residue polypeptide: Large ribosomal subunit protein bL35 (67 aa).

It belongs to the bacterial ribosomal protein bL35 family.

This chain is Large ribosomal subunit protein bL35, found in Bartonella tribocorum (strain CIP 105476 / IBS 506).